Consider the following 317-residue polypeptide: 4-diphosphocytidyl-2-C-methyl-D-erythritol kinase (317 aa).

Residue lysine 11 is part of the active site. 99–109 (PVAAGLAGGST) lines the ATP pocket. The active site involves aspartate 141.

This sequence belongs to the GHMP kinase family. IspE subfamily.

It carries out the reaction 4-CDP-2-C-methyl-D-erythritol + ATP = 4-CDP-2-C-methyl-D-erythritol 2-phosphate + ADP + H(+). It functions in the pathway isoprenoid biosynthesis; isopentenyl diphosphate biosynthesis via DXP pathway; isopentenyl diphosphate from 1-deoxy-D-xylulose 5-phosphate: step 3/6. Its function is as follows. Catalyzes the phosphorylation of the position 2 hydroxy group of 4-diphosphocytidyl-2C-methyl-D-erythritol. This chain is 4-diphosphocytidyl-2-C-methyl-D-erythritol kinase, found in Nostoc sp. (strain PCC 7120 / SAG 25.82 / UTEX 2576).